The primary structure comprises 131 residues: GATA zinc finger domain-containing protein 2 (131 aa).

Low complexity predominate over residues 21–55 (STATDATSADGAASETDAASATDTTSATDPTSATD). A disordered region spans residues 21–85 (STATDATSAD…RGRPYISTPP (65 aa)). A compositionally biased stretch (polar residues) spans 57 to 74 (IATTNTTGITSSGPTTNG). Residues 88–115 (CYDCGRTRSPYWRKGTYNGQVVHLCNAC) form a GATA-type zinc finger.

The sequence is that of GATA zinc finger domain-containing protein 2 (comH) from Dictyostelium discoideum (Social amoeba).